A 130-amino-acid chain; its full sequence is Small ribosomal subunit protein uS11 (130 aa).

The protein belongs to the universal ribosomal protein uS11 family. As to quaternary structure, part of the 30S ribosomal subunit. Interacts with proteins S7 and S18. Binds to IF-3.

In terms of biological role, located on the platform of the 30S subunit, it bridges several disparate RNA helices of the 16S rRNA. Forms part of the Shine-Dalgarno cleft in the 70S ribosome. The chain is Small ribosomal subunit protein uS11 from Alkalilimnicola ehrlichii (strain ATCC BAA-1101 / DSM 17681 / MLHE-1).